Consider the following 493-residue polypeptide: Xaa-Pro dipeptidase (493 aa).

Ala2 bears the N-acetylalanine mark. At Ser167 the chain carries Phosphoserine. His255 lines the a dipeptide pocket. Mn(2+)-binding residues include Asp276, Asp287, and His370. Asp287 is a binding site for a dipeptide. A dipeptide is bound by residues His377 and Arg398. 2 residues coordinate Mn(2+): Glu412 and Glu452.

The protein belongs to the peptidase M24B family. Eukaryotic-type prolidase subfamily. In terms of assembly, homodimer. The cofactor is Mn(2+).

It catalyses the reaction Xaa-L-Pro dipeptide + H2O = an L-alpha-amino acid + L-proline. With respect to regulation, specifically inhibited by the pseudodipeptide CQ31. Inhibition by CQ31 indirectly activates the CARD8 inflammasome: dipeptide accumulation following PEPD inactivation weaky inhibit dipeptidyl peptidases DDP8 and DPP9, relieving DPP8- and/or DPP9-mediated inhibition of CARD8. In terms of biological role, dipeptidase that catalyzes the hydrolysis of dipeptides with a prolyl (Xaa-Pro) or hydroxyprolyl residue in the C-terminal position. The preferred dipeptide substrate is Gly-Pro, but other Xaa-Pro dipeptides, such as Ala-Pro, Met-Pro, Phe-Pro, Val-Pro and Leu-Pro, can be cleaved. Plays an important role in collagen metabolism because the high level of iminoacids in collagen. This chain is Xaa-Pro dipeptidase, found in Homo sapiens (Human).